We begin with the raw amino-acid sequence, 569 residues long: Cysteine--tRNA ligase CPS1 homolog, chloroplastic/mitochondrial (569 aa).

Residues 1–42 (MAAARRAAGLLPLLLSSPSRARLPHRQALALTPPLLRPHRLY) constitute a chloroplast and mitochondrion transit peptide. Zn(2+) is bound at residue Cys99. A 'HIGH' region motif is present at residues 101-111 (VTPYDDSHIGH). 3 residues coordinate Zn(2+): Cys279, His304, and Glu308. The 'KMSKS' region signature appears at 336 to 340 (KMSKS). Lys339 is a binding site for ATP.

Belongs to the class-I aminoacyl-tRNA synthetase family. Requires Zn(2+) as cofactor.

The protein localises to the plastid. Its subcellular location is the chloroplast. It is found in the mitochondrion. It carries out the reaction tRNA(Cys) + L-cysteine + ATP = L-cysteinyl-tRNA(Cys) + AMP + diphosphate. In terms of biological role, nuclear genome-encoded factor required for normal assembly of chloroplast polysomes. This Oryza sativa subsp. japonica (Rice) protein is Cysteine--tRNA ligase CPS1 homolog, chloroplastic/mitochondrial.